Reading from the N-terminus, the 348-residue chain is CCAAT/enhancer-binding protein beta (348 aa).

The required for Lys-174 sumoylation stretch occupies residues 1–24 (MQRLVVWDPVCLPLPPPPPAFKSM). An Asymmetric dimethylarginine; by CARM1 modification is found at arginine 3. The interval 24–135 (MEVANFYYEA…YGGKNCKKAA (112 aa)) is required for MYC transcriptional repression. Residue lysine 43 is modified to N6-acetyllysine; alternate. Lysine 43 is modified (N6-methylated lysine; alternate). Disordered regions lie at residues 44 to 65 (AAPA…ELGS) and 79 to 112 (LEPL…ASSG). Residues 47-59 (AAPPADRPGPRPP) show a composition bias toward pro residues. The 9aaTAD motif lies at 116-124 (DFLSDLFSD). N6-acetyllysine; by KAT2A and KAT2B is present on residues lysine 129 and lysine 132. Lysine 133 is subject to N6-acetyllysine; by KAT2A and KAT2B; alternate. Residue lysine 133 forms a Glycyl lysine isopeptide (Lys-Gly) (interchain with G-Cter in SUMO2); alternate linkage. Positions 158–178 (APLHPPPPPPPPPAELKAEPG) are disordered. Pro residues predominate over residues 160 to 171 (LHPPPPPPPPPA). Lysine 174 participates in a covalent cross-link: Glycyl lysine isopeptide (Lys-Gly) (interchain with G-Cter in SUMO2); alternate. Lysine 174 participates in a covalent cross-link: Glycyl lysine isopeptide (Lys-Gly) (interchain with G-Cter in SUMO); alternate. Glycyl lysine isopeptide (Lys-Gly) (interchain with G-Cter in SUMO2) cross-links involve residues lysine 185 and lysine 187. Low complexity predominate over residues 219 to 259 (SGSSGSLSTSSSSSPPGTPSPADAKATPAAAACYAGAAPAP). The segment at 219 to 277 (SGSSGSLSTSSSSSPPGTPSPADAKATPAAAACYAGAAPAPSQVKSKAKKTVDKHSDEY) is disordered. Threonine 227 bears the Phosphothreonine; by GSK3-beta mark. O-linked (GlcNAc) serine glycosylation is found at serine 228 and serine 229. Phosphoserine; by GSK3-beta is present on serine 232. Residue threonine 236 is modified to Phosphothreonine; by RPS6KA1, CDK2 and MAPK. Glycyl lysine isopeptide (Lys-Gly) (interchain with G-Cter in SUMO2) cross-links involve residues lysine 263 and lysine 265. Basic and acidic residues predominate over residues 268-277 (KTVDKHSDEY). Threonine 269 carries the phosphothreonine; by RPS6KA1 and PKC/PRKCA modification. One can recognise a bZIP domain in the interval 274–337 (SDEYKIRRER…STLRNLFKTL (64 aa)). Residues 278–298 (KIRRERNNIAVRKSRDKAKMR) form a basic motif region. Serine 291 bears the Phosphoserine; by PKC/PRKCA mark. The leucine-zipper stretch occupies residues 300–307 (LETQHKVL). Position 328 is a phosphoserine; by CaMK2 (serine 328). Residue lysine 335 forms a Glycyl lysine isopeptide (Lys-Gly) (interchain with G-Cter in SUMO2) linkage.

Belongs to the bZIP family. C/EBP subfamily. Binds DNA as a homodimer and as a heterodimer. Interacts with ATF4. Binds DNA as a heterodimer with ATF4. Interacts with MYB; within the complex, MYB and CEBPB bind to different promoter regions. Can form stable heterodimers with CEBPA, CEBPD and CEBPG. Interacts with SIX1. Interacts with TRIM28 and PTGES2. Interacts with PRDM16. Interacts with CCDC85B. Forms a complex with THOC5. Interacts with ZNF638; this interaction increases transcriptional activation. Interacts with CIDEA and CIDEC; these interactions increase transcriptional activation of a subset of CEBPB downstream target genes. Interacts with DDIT3/CHOP. Interacts with EP300; recruits EP300 to chromatin. Interacts with RORA; the interaction disrupts interaction with EP300. Interacts (not methylated) with MED23, MED26, SMARCA2, SMARCB1 and SMARCC1. Interacts with KAT2A and KAT2B. Interacts with ATF5; EP300 is required for ATF5 and CEBPB interaction and DNA binding. Interacts with NFE2L1; the heterodimer represses expression of DSPP during odontoblast differentiation. Methylated. Methylation at Arg-3 by CARM1 and at Lys-43 by EHMT2 inhibit transactivation activity. Methylation is probably inhibited by phosphorylation at Thr-236. Post-translationally, sumoylated by polymeric chains of SUMO2 or SUMO3. Sumoylation at Lys-174 is required for inhibition of T-cells proliferation. In adipocytes, sumoylation at Lys-174 by PIAS1 leads to ubiquitination and subsequent proteasomal degradation. Desumoylated by SENP2, which abolishes ubiquitination and stabilizes protein levels. In terms of processing, ubiquitinated, leading to proteasomal degradation. Phosphorylated at Thr-236 by MAPK and CDK2, serves to prime phosphorylation at Thr-227 and Ser-232 by GSK3B and acquire DNA-binding as well as transactivation activities, required to induce adipogenesis. MAPK and CDK2 act sequentially to maintain Thr-236 in the primed phosphorylated state during mitotical cloning expansion and thereby progression of terminal differentiation. Phosphorylation at Thr-269 enhances transactivation activity. Phosphorylation at Ser-328 in response to calcium increases transactivation activity. Phosphorylated at Thr-236 by RPS6KA1. Post-translationally, O-glycosylated, glycosylation at Ser-228 and Ser-229 prevents phosphorylation on Thr-236, Ser-232 and Thr-227 and DNA binding activity which delays the adipocyte differentiation program. In terms of processing, acetylated. Acetylation at Lys-43 is an important and dynamic regulatory event that contributes to its ability to transactivate target genes, including those associated with adipogenesis and adipocyte function. Deacetylation by HDAC1 represses its transactivation activity. Acetylated by KAT2A and KAT2B within a cluster of lysine residues between amino acids 129-133, this acetylation is strongly induced by glucocorticoid treatment and enhances transactivation activity.

It is found in the nucleus. Its subcellular location is the cytoplasm. Functionally, important transcription factor regulating the expression of genes involved in immune and inflammatory responses. Also plays a significant role in adipogenesis, as well as in the gluconeogenic pathway, liver regeneration, and hematopoiesis. The consensus recognition site is 5'-T[TG]NNGNAA[TG]-3'. Its functional capacity is governed by protein interactions and post-translational protein modifications. During early embryogenesis, plays essential and redundant roles with CEBPA. Has a promitotic effect on many cell types such as hepatocytes and adipocytes but has an antiproliferative effect on T-cells by repressing MYC expression, facilitating differentiation along the T-helper 2 lineage. Binds to regulatory regions of several acute-phase and cytokines genes and plays a role in the regulation of acute-phase reaction and inflammation. Also plays a role in intracellular bacteria killing. During adipogenesis, is rapidly expressed and, after activation by phosphorylation, induces CEBPA and PPARG, which turn on the series of adipocyte genes that give rise to the adipocyte phenotype. The delayed transactivation of the CEBPA and PPARG genes by CEBPB appears necessary to allow mitotic clonal expansion and thereby progression of terminal differentiation. Essential for female reproduction because of a critical role in ovarian follicle development. Restricts osteoclastogenesis: together with NFE2L1; represses expression of DSPP during odontoblast differentiation. The sequence is that of CCAAT/enhancer-binding protein beta (CEBPB) from Bos taurus (Bovine).